Consider the following 110-residue polypeptide: Large ribosomal subunit protein uL22 (110 aa).

It belongs to the universal ribosomal protein uL22 family. Part of the 50S ribosomal subunit.

This protein binds specifically to 23S rRNA; its binding is stimulated by other ribosomal proteins, e.g. L4, L17, and L20. It is important during the early stages of 50S assembly. It makes multiple contacts with different domains of the 23S rRNA in the assembled 50S subunit and ribosome. Functionally, the globular domain of the protein is located near the polypeptide exit tunnel on the outside of the subunit, while an extended beta-hairpin is found that lines the wall of the exit tunnel in the center of the 70S ribosome. This chain is Large ribosomal subunit protein uL22, found in Citrobacter koseri (strain ATCC BAA-895 / CDC 4225-83 / SGSC4696).